Reading from the N-terminus, the 570-residue chain is L-ascorbate oxidase (570 aa).

A signal peptide spans 1–18; it reads MGMWWIVAVAILAHTASA. Plastocyanin-like domains are found at residues 33–140 and 154–317; these read WPDC…IIDV and FNLL…LNYV. Intrachain disulfides connect Cys-36–Cys-219, Cys-98–Cys-557, and Cys-197–Cys-211. Positions 77 and 79 each coordinate Cu cation. N-linked (GlcNAc...) asparagine glycosylation occurs at Asn-109. Positions 121 and 123 each coordinate Cu cation. N-linked (GlcNAc...) asparagine glycosylation occurs at Asn-196. N-linked (GlcNAc...) asparagine glycans are attached at residues Asn-229, Asn-343, Asn-384, Asn-407, Asn-434, Asn-442, and Asn-458. Positions 426 to 543 constitute a Plastocyanin-like 3 domain; sequence RNRNAKQGNV…MGMGVVFAEG (118 aa). Cu cation contacts are provided by His-463, His-466, His-468, His-525, Cys-526, His-527, His-531, and Met-536.

It belongs to the multicopper oxidase family. As to quaternary structure, dimer. The cofactor is Cu cation.

It is found in the secreted. It carries out the reaction 4 L-ascorbate + O2 = 4 monodehydro-L-ascorbate radical + 2 H2O. Its pathway is cofactor degradation; L-ascorbate degradation. In terms of biological role, ascorbate oxidase involved in a redox system involving ascorbic acid (AsA). The oxidation of AsA represses responses to high salinity and oxidative stress conditions such as vegetative growth and seed production reductions. Negative regulator of defense responses toward incompatible Turnip mosaic virus (TuMV strain UK1) by preventing jasmonic acid (JA)- dependent accumulation of ascorbic acid (AsA, AS) and dehydroascobic acid (DHA). In Brassica rapa subsp. pekinensis (Chinese cabbage), this protein is L-ascorbate oxidase.